Here is a 396-residue protein sequence, read N- to C-terminus: Bifunctional enzyme Fae/Hps (396 aa).

Residues 1 to 161 (MYQIGEALIG…YEKDRGVHAI (161 aa)) form a formaldehyde-activating enzyme region. The active-site Proton donor is His-17. Asp-19, Leu-48, Lys-66, Thr-68, and Gln-83 together coordinate substrate. Residues 162 to 396 (MGYKITRLWD…IDQYRIMTDF (235 aa)) are 3-hexulose-6-phosphate synthase.

The protein in the N-terminal section; belongs to the formaldehyde-activating enzyme family. It in the C-terminal section; belongs to the HPS/KGPDC family. HPS subfamily.

It catalyses the reaction 5,6,7,8-tetrahydromethanopterin + formaldehyde = 5,10-methylenetetrahydromethanopterin + H2O. The enzyme catalyses D-ribulose 5-phosphate + formaldehyde = D-arabino-hex-3-ulose 6-phosphate. It participates in carbohydrate biosynthesis; D-ribose 5-phosphate biosynthesis. In terms of biological role, catalyzes the condensation of formaldehyde with tetrahydromethanopterin (H(4)MPT) to 5,10-methylenetetrahydromethanopterin. Its function is as follows. Catalyzes the reversible formation of ribulose-5-phosphate and formaldehyde from 3-hexulose-6-phosphate. This chain is Bifunctional enzyme Fae/Hps, found in Methanocella arvoryzae (strain DSM 22066 / NBRC 105507 / MRE50).